Here is a 95-residue protein sequence, read N- to C-terminus: MNKSILHTIIIYTLASCPYCIKAKALLDKKNVIYEEIEVSNLTQEEKEKFIKKSGGKSTVPQIFIDNMHVGGCDDLFNLEKEGRLDKLLEHQPKN.

Positions 1–95 (MNKSILHTII…DKLLEHQPKN (95 aa)) constitute a Glutaredoxin domain. Cys-17 and Cys-20 are oxidised to a cystine.

Belongs to the glutaredoxin family. As to quaternary structure, monomer.

It localises to the cytoplasm. In terms of biological role, has a glutathione-disulfide oxidoreductase activity in the presence of NADPH and glutathione reductase. Reduces low molecular weight disulfides and proteins. In Rickettsia prowazekii (strain Madrid E), this protein is Glutaredoxin 1 (grxC1).